A 940-amino-acid polypeptide reads, in one-letter code: Protein translocase subunit SecA (940 aa).

Residues Gln-85, 103–107 (GEGKT), and Asp-505 each bind ATP. The interval 851–940 (PVQDGAERPS…KGGGGRRRKK (90 aa)) is disordered. Basic and acidic residues predominate over residues 855–865 (GAERPSLEKEG). The span at 928 to 940 (RRRKGGGGRRRKK) shows a compositional bias: basic residues.

The protein belongs to the SecA family. As to quaternary structure, monomer and homodimer. Part of the essential Sec protein translocation apparatus which comprises SecA, SecYEG and auxiliary proteins SecDF. Other proteins may also be involved.

The protein resides in the cell membrane. It is found in the cytoplasm. It catalyses the reaction ATP + H2O + cellular proteinSide 1 = ADP + phosphate + cellular proteinSide 2.. Part of the Sec protein translocase complex. Interacts with the SecYEG preprotein conducting channel. Has a central role in coupling the hydrolysis of ATP to the transfer of proteins into and across the cell membrane, serving as an ATP-driven molecular motor driving the stepwise translocation of polypeptide chains across the membrane. This Streptomyces griseus protein is Protein translocase subunit SecA.